The primary structure comprises 129 residues: ATP synthase epsilon chain (129 aa).

Belongs to the ATPase epsilon chain family. In terms of assembly, F-type ATPases have 2 components, CF(1) - the catalytic core - and CF(0) - the membrane proton channel. CF(1) has five subunits: alpha(3), beta(3), gamma(1), delta(1), epsilon(1). CF(0) has three main subunits: a, b and c.

The protein localises to the cell inner membrane. In terms of biological role, produces ATP from ADP in the presence of a proton gradient across the membrane. The chain is ATP synthase epsilon chain from Campylobacter jejuni subsp. jejuni serotype O:2 (strain ATCC 700819 / NCTC 11168).